The following is a 70-amino-acid chain: ATP synthase subunit c (70 aa).

Transmembrane regions (helical) follow at residues 4 to 24 and 47 to 67; these read IATA…NGLI and FIGI…GFLL.

It belongs to the ATPase C chain family. In terms of assembly, F-type ATPases have 2 components, F(1) - the catalytic core - and F(0) - the membrane proton channel. F(1) has five subunits: alpha(3), beta(3), gamma(1), delta(1), epsilon(1). F(0) has three main subunits: a(1), b(2) and c(10-14). The alpha and beta chains form an alternating ring which encloses part of the gamma chain. F(1) is attached to F(0) by a central stalk formed by the gamma and epsilon chains, while a peripheral stalk is formed by the delta and b chains.

It localises to the cell membrane. Its function is as follows. F(1)F(0) ATP synthase produces ATP from ADP in the presence of a proton or sodium gradient. F-type ATPases consist of two structural domains, F(1) containing the extramembraneous catalytic core and F(0) containing the membrane proton channel, linked together by a central stalk and a peripheral stalk. During catalysis, ATP synthesis in the catalytic domain of F(1) is coupled via a rotary mechanism of the central stalk subunits to proton translocation. In terms of biological role, key component of the F(0) channel; it plays a direct role in translocation across the membrane. A homomeric c-ring of between 10-14 subunits forms the central stalk rotor element with the F(1) delta and epsilon subunits. This is ATP synthase subunit c from Exiguobacterium sibiricum (strain DSM 17290 / CCUG 55495 / CIP 109462 / JCM 13490 / 255-15).